The primary structure comprises 313 residues: Sorting nexin-20 (313 aa).

Positions 1–61 (MASPQHPGGP…MTTRELQEHW (61 aa)) are disordered. Ser-3 is subject to Phosphoserine. Positions 29–38 (PPGPDLPCPG) are enriched in pro residues. Residues 45 to 55 (GPTSNSNMTTR) show a composition bias toward polar residues. The PX domain maps to 71–188 (VRLLFEIASA…DFLTRPELCE (118 aa)). A 1,2-diacyl-sn-glycero-3-phospho-(1D-myo-inositol-3-phosphate) contacts are provided by Arg-113, Ser-115, Lys-140, and Arg-154.

Belongs to the sorting nexin family. Interacts with SELPLG. Interaction with SELPLG is controversial.

The protein localises to the early endosome membrane. It is found in the cell membrane. Its subcellular location is the cytoplasm. It localises to the nucleus. Its function is as follows. May play a role in cellular vesicle trafficking. Has been proposed to function as a sorting protein that targets SELPLG into endosomes, but has no effect on SELPLG internalization from the cell surface, or on SELPLG-mediated cell-cell adhesion. In Rattus norvegicus (Rat), this protein is Sorting nexin-20 (Snx20).